The primary structure comprises 649 residues: 1-deoxy-D-xylulose-5-phosphate synthase 1 (649 aa).

Thiamine diphosphate contacts are provided by residues H73 and 113-115 (SHA). Mg(2+) is bound at residue D144. Thiamine diphosphate-binding positions include 145–146 (GA), N174, Y285, and E367. N174 serves as a coordination point for Mg(2+). The tract at residues 623-649 (LLPGTGTRPGAQEYRPRMPLTDWSEPA) is disordered.

This sequence belongs to the transketolase family. DXPS subfamily. Homodimer. It depends on Mg(2+) as a cofactor. Thiamine diphosphate serves as cofactor.

The enzyme catalyses D-glyceraldehyde 3-phosphate + pyruvate + H(+) = 1-deoxy-D-xylulose 5-phosphate + CO2. Its pathway is metabolic intermediate biosynthesis; 1-deoxy-D-xylulose 5-phosphate biosynthesis; 1-deoxy-D-xylulose 5-phosphate from D-glyceraldehyde 3-phosphate and pyruvate: step 1/1. In terms of biological role, catalyzes the acyloin condensation reaction between C atoms 2 and 3 of pyruvate and glyceraldehyde 3-phosphate to yield 1-deoxy-D-xylulose-5-phosphate (DXP). This Kitasatospora griseola (Streptomyces griseolosporeus) protein is 1-deoxy-D-xylulose-5-phosphate synthase 1.